The following is a 222-amino-acid chain: CASP-like protein 1E1 (222 aa).

Residues 1–59 are Cytoplasmic-facing; sequence MEASRVKPGFNGVGMAAGSVNGSSRRPGPGLGYGYGYYMGSGAAAGGSGRAAQAPVDGC. The helical transmembrane segment at 60 to 80 threads the bilayer; it reads SVALRVFVVASTLVSAVVMGV. Over 81–110 the chain is Extracellular; that stretch reads DRQTRTIQITITDALPPLEVPLTANWSYSS. A glycan (N-linked (GlcNAc...) asparagine) is linked at Asn-105. Residues 111–131 traverse the membrane as a helical segment; sequence AFVYFVVANAMVCLFSAAALA. At 132-146 the chain is on the cytoplasmic side; that stretch reads ACRSRAAMVPVMVGD. Residues 147-167 traverse the membrane as a helical segment; that stretch reads LLALALLYSAVGAAAEFGILG. The Extracellular segment spans residues 168-189; it reads ERGNSHVRWAKVCNVYGRFCDR. The chain crosses the membrane as a helical span at residues 190 to 210; that stretch reads AMAAVIVSLIGAFANLVLLML. The Cytoplasmic portion of the chain corresponds to 211 to 222; that stretch reads NILTIHKSSSYY.

The protein belongs to the Casparian strip membrane proteins (CASP) family. In terms of assembly, homodimer and heterodimers.

It is found in the cell membrane. The sequence is that of CASP-like protein 1E1 from Sorghum bicolor (Sorghum).